A 2368-amino-acid chain; its full sequence is Serine/threonine-protein kinase MEC1 (2368 aa).

The FAT domain occupies 1399 to 1944 (LLAQRSLETD…LWYITALVNS (546 aa)). In terms of domain architecture, PI3K/PI4K catalytic spans 2049-2352 (FGSSYKVFSS…QTETLIQEAT (304 aa)). The G-loop stretch occupies residues 2055 to 2061 (VFSSLKK). The binding to the RPA complex stretch occupies residues 2140–2368 (SILSTKYESL…KMYIGWLPFW (229 aa)). Positions 2221–2229 (GLGDRHCEN) are catalytic loop. The interval 2241–2265 (HVDFDCLFEKGKRLPVPEIVPFRLT) is activation loop. The region spanning 2336–2368 (LVLSVAGQTETLIQEATSEDNLSKMYIGWLPFW) is the FATC domain.

Belongs to the PI3/PI4-kinase family. ATM subfamily. In terms of assembly, interacts with LCD1, which is required for localization MEC1 to the RPA complex. Interacts directly with the RPA subunits RFA1 and RFA2.

The protein localises to the nucleus. The enzyme catalyses L-seryl-[protein] + ATP = O-phospho-L-seryl-[protein] + ADP + H(+). The catalysed reaction is L-threonyl-[protein] + ATP = O-phospho-L-threonyl-[protein] + ADP + H(+). Functionally, serine/threonine protein kinase which activates checkpoint signaling upon genotoxic stresses such as ionizing radiation (IR), ultraviolet light (UV), or DNA replication stalling, thereby acting as a DNA damage sensor. Recognizes the substrate consensus sequence [ST]-Q. Recruited in complex with protein LCD1 by the single-strand-binding protein complex RPA to DNA lesions in order to initiate the DNA repair by homologous recombination, after the MRX-complex and TEL1 are displaced. Phosphorylates LCD1 and RPA2, a subunit of RPA, involved in DNA replication, repair and recombination. Phosphorylates RAD9, CHK1 and RAD53, which leads to the activation of the CHK1 and RAD53 kinases involved in DNA damage repair cascade. Phosphorylates histone H2A to form H2AS128ph (gamma-H2A) at sites of DNA damage, also involved in the regulation of DNA damage response mechanism. Also phosphorylates SLX4 and RTT107 which are proteins involved in genome stability. Required for cell growth and meiotic recombination. This chain is Serine/threonine-protein kinase MEC1 (MEC1), found in Saccharomyces cerevisiae (strain ATCC 204508 / S288c) (Baker's yeast).